The primary structure comprises 529 residues: Bifunctional purine biosynthesis protein PurH (529 aa).

Positions 1 to 148 constitute an MGS-like domain; the sequence is MTNRNVIKNV…KNYKNVLVVT (148 aa).

Belongs to the PurH family.

The enzyme catalyses (6R)-10-formyltetrahydrofolate + 5-amino-1-(5-phospho-beta-D-ribosyl)imidazole-4-carboxamide = 5-formamido-1-(5-phospho-D-ribosyl)imidazole-4-carboxamide + (6S)-5,6,7,8-tetrahydrofolate. It catalyses the reaction IMP + H2O = 5-formamido-1-(5-phospho-D-ribosyl)imidazole-4-carboxamide. Its pathway is purine metabolism; IMP biosynthesis via de novo pathway; 5-formamido-1-(5-phospho-D-ribosyl)imidazole-4-carboxamide from 5-amino-1-(5-phospho-D-ribosyl)imidazole-4-carboxamide (10-formyl THF route): step 1/1. It participates in purine metabolism; IMP biosynthesis via de novo pathway; IMP from 5-formamido-1-(5-phospho-D-ribosyl)imidazole-4-carboxamide: step 1/1. The sequence is that of Bifunctional purine biosynthesis protein PurH from Buchnera aphidicola subsp. Baizongia pistaciae (strain Bp).